The chain runs to 242 residues: Endoglucanase-5 (242 aa).

The first 17 residues, 1–17, serve as a signal peptide directing secretion; it reads MKATLVLGSLIVGAVSA. The interval 18–182 is catalytic; that stretch reads YKATTTRYYD…ETDPTPVLGN (165 aa). The active-site Nucleophile is the aspartate 27. The Proton donor role is filled by aspartate 134. Residues 177–206 form a disordered region; it reads TPVLGNDTGSTPPGSSPPATSSSPPSGGGQ. A glycan (N-linked (GlcNAc...) asparagine) is linked at asparagine 182. Low complexity predominate over residues 184-201; sequence TGSTPPGSSPPATSSSPP. The CBM1 domain occupies 205–241; the sequence is GQQTLYGQCGGAGWTGPTTCQAPGTCKVQNQWYSQCL. 2 disulfides stabilise this stretch: cysteine 213/cysteine 230 and cysteine 224/cysteine 240.

Belongs to the glycosyl hydrolase 45 (cellulase K) family.

It catalyses the reaction Endohydrolysis of (1-&gt;4)-beta-D-glucosidic linkages in cellulose, lichenin and cereal beta-D-glucans.. In Hypocrea jecorina (Trichoderma reesei), this protein is Endoglucanase-5 (egl5).